A 220-amino-acid chain; its full sequence is MNIPPYRTRIKFCGMTRVGDVRLASELGVDAVGLIFASGSSRLLTVSAACAIRRTVAPMVNVVALFQNNSADEIHTVVRTVRPTLLQFHGKEEDAFCRTFNVPYLKAIPMAGAEAKRICTRTLYLKYPNAAGFIFDSHLKGGTGQTFDWSRLPIDLHHPFLLAGGITPENVFDAIAATVPWGVDVSSGIELQPGIKDGDKMRQFVEEVRRADGRRQFGVA.

The protein belongs to the TrpF family.

It carries out the reaction N-(5-phospho-beta-D-ribosyl)anthranilate = 1-(2-carboxyphenylamino)-1-deoxy-D-ribulose 5-phosphate. Its pathway is amino-acid biosynthesis; L-tryptophan biosynthesis; L-tryptophan from chorismate: step 3/5. The polypeptide is N-(5'-phosphoribosyl)anthranilate isomerase (Xylella fastidiosa (strain M12)).